A 382-amino-acid polypeptide reads, in one-letter code: S-adenosylmethionine synthase (382 aa).

Glu-10 contributes to the Mg(2+) binding site. ATP is bound at residue His-16. Glu-44 provides a ligand contact to K(+). L-methionine-binding residues include Glu-57 and Gln-100. ATP is bound by residues 166-168 (DTK), 234-237 (SGRF), Asp-245, 251-252 (RK), Ala-268, Lys-272, and Lys-276. L-methionine is bound at residue Asp-245. Lys-276 serves as a coordination point for L-methionine.

It belongs to the AdoMet synthase family. Mg(2+) is required as a cofactor. Requires K(+) as cofactor.

It carries out the reaction L-methionine + ATP + H2O = S-adenosyl-L-methionine + phosphate + diphosphate. The protein operates within amino-acid biosynthesis; S-adenosyl-L-methionine biosynthesis; S-adenosyl-L-methionine from L-methionine: step 1/1. Its function is as follows. Catalyzes the formation of S-adenosylmethionine from methionine and ATP. The reaction comprises two steps that are both catalyzed by the same enzyme: formation of S-adenosylmethionine (AdoMet) and triphosphate, and subsequent hydrolysis of the triphosphate. The sequence is that of S-adenosylmethionine synthase (sam1) from Schizosaccharomyces pombe (strain 972 / ATCC 24843) (Fission yeast).